Here is a 254-residue protein sequence, read N- to C-terminus: Peroxisomal membrane protein 11 homolog (254 aa).

Residues 1–91 (MAGILSKPNY…ILALFKVKNP (91 aa)) are Cytoplasmic-facing. Residues 92–112 (FAFLNILALIRQSGMYFYWVF) traverse the membrane as a helical segment. Over 113-227 (DHLILGTNIG…DLIIASTLLK (115 aa)) the chain is Lumenal. A helical transmembrane segment spans residues 228–248 (IYPFSQGTIGISGIISALIGA). At 249–254 (YQMWPK) the chain is on the cytoplasmic side.

The protein belongs to the peroxin-11 family.

The protein localises to the peroxisome membrane. In terms of biological role, involved in peroxisomal proliferation. Could participate in peroxisomal elongation or fission. May be involved in parceling of peroxisomes into regular quanta. This is Peroxisomal membrane protein 11 homolog (pex11) from Dictyostelium discoideum (Social amoeba).